The following is a 427-amino-acid chain: Flotillin-1 (427 aa).

Phosphoserine occurs at positions 19, 163, and 385. Position 387 is a phosphothreonine (T387).

The protein belongs to the band 7/mec-2 family. Flotillin subfamily. Heterooligomeric complex of flotillin-1 and flotillin-2 and caveolin-1 and caveolin-2. Interacts with ECPAS.

The protein localises to the cell membrane. The protein resides in the endosome. Its subcellular location is the membrane. It is found in the caveola. It localises to the melanosome. The protein localises to the membrane raft. Functionally, may act as a scaffolding protein within caveolar membranes, functionally participating in formation of caveolae or caveolae-like vesicles. The polypeptide is Flotillin-1 (FLOT1) (Macaca mulatta (Rhesus macaque)).